The following is a 279-amino-acid chain: Orotidine 5'-phosphate decarboxylase (279 aa).

Substrate contacts are provided by residues D8, K30, 58–67 (DLKFHDIPNT), T117, R177, Q186, G206, and R207. K60 functions as the Proton donor in the catalytic mechanism.

It belongs to the OMP decarboxylase family. Type 1 subfamily. In terms of assembly, homodimer.

The catalysed reaction is orotidine 5'-phosphate + H(+) = UMP + CO2. Its pathway is pyrimidine metabolism; UMP biosynthesis via de novo pathway; UMP from orotate: step 2/2. Functionally, catalyzes the decarboxylation of orotidine 5'-monophosphate (OMP) to uridine 5'-monophosphate (UMP). This is Orotidine 5'-phosphate decarboxylase from Campylobacter jejuni subsp. jejuni serotype O:2 (strain ATCC 700819 / NCTC 11168).